Here is a 166-residue protein sequence, read N- to C-terminus: Macrocypin-5a (166 aa).

Residues 20-39 (NIPGGMYASSKDGKDEPVTA) form a disordered region.

Belongs to the protease inhibitor I85 family.

In terms of biological role, inhibits papain and cysteine cathepsin endopeptidases, and also inhibits cathepsins B and H, which exhibit both exopeptidase and endopeptidase activities. The sequence is that of Macrocypin-5a from Macrolepiota procera (Parasol mushroom).